We begin with the raw amino-acid sequence, 692 residues long: Elongation factor G (692 aa).

One can recognise a tr-type G domain in the interval 8 to 282 (EKVRNIGIAA…AVVDYLPAPS (275 aa)). GTP is bound by residues 17–24 (AHIDAGKT), 81–85 (DTPGH), and 135–138 (NKMD).

This sequence belongs to the TRAFAC class translation factor GTPase superfamily. Classic translation factor GTPase family. EF-G/EF-2 subfamily.

It localises to the cytoplasm. Catalyzes the GTP-dependent ribosomal translocation step during translation elongation. During this step, the ribosome changes from the pre-translocational (PRE) to the post-translocational (POST) state as the newly formed A-site-bound peptidyl-tRNA and P-site-bound deacylated tRNA move to the P and E sites, respectively. Catalyzes the coordinated movement of the two tRNA molecules, the mRNA and conformational changes in the ribosome. This Nostoc punctiforme (strain ATCC 29133 / PCC 73102) protein is Elongation factor G.